The chain runs to 567 residues: Phenylalanine ammonia-lyase (567 aa).

Y78 (proton donor/acceptor) is an active-site residue. A cross-link (5-imidazolinone (Ala-Gly)) is located at residues A167–G169. A 2,3-didehydroalanine (Ser) modification is found at S168. Residues N223, Q311, R317, N347, K419, E448, and N451 each coordinate (E)-cinnamate.

It belongs to the PAL/histidase family. In terms of assembly, homotetramer. Contains an active site 4-methylidene-imidazol-5-one (MIO), which is formed autocatalytically by cyclization and dehydration of residues Ala-Ser-Gly.

Its subcellular location is the cytoplasm. The catalysed reaction is L-phenylalanine = (E)-cinnamate + NH4(+). It participates in phenylpropanoid metabolism; trans-cinnamate biosynthesis; trans-cinnamate from L-phenylalanine: step 1/1. In terms of biological role, catalyzes the non-oxidative deamination of L-phenylalanine to form trans-cinnamic acid, the first step in the phenylpropanoid pathway. The protein is Phenylalanine ammonia-lyase of Trichormus variabilis (strain ATCC 29413 / PCC 7937) (Anabaena variabilis).